Reading from the N-terminus, the 762-residue chain is Ribosome-releasing factor 2, mitochondrial (762 aa).

Residues 1 to 35 constitute a mitochondrion transit peptide; that stretch reads MLLSLTFPVLRGCTGHLVNRSLQAPRWRVTWKRSY. The tr-type G domain occupies 54-341; it reads SKIRNIGIMA…AITAYLPAPN (288 aa). GTP contacts are provided by residues 63-70, 127-131, and 181-184; these read AHIDAGKT, DTPGH, and NKMD.

It belongs to the TRAFAC class translation factor GTPase superfamily. Classic translation factor GTPase family. EF-G/EF-2 subfamily.

It is found in the mitochondrion. It carries out the reaction GTP + H2O = GDP + phosphate + H(+). Its function is as follows. Mitochondrial GTPase that mediates the disassembly of ribosomes from messenger RNA at the termination of mitochondrial protein biosynthesis. Acts in collaboration with mrrf. GTP hydrolysis follows the ribosome disassembly and probably occurs on the ribosome large subunit. Not involved in the GTP-dependent ribosomal translocation step during translation elongation. This chain is Ribosome-releasing factor 2, mitochondrial (gfm2), found in Danio rerio (Zebrafish).